The primary structure comprises 317 residues: Egg-laying defective protein 26 (317 aa).

Positions 156–277 (EVNVSGVKFY…CSTGVPFSYD (122 aa)) constitute an LRAT domain. Residues His-166 and His-178 contribute to the active site. Residue Cys-261 is the Acyl-thioester intermediate of the active site.

As to expression, highly expressed in the cells of the spermatheca, the mouth, and the lining of the pharynx, the rectum, and the excretory canal. Also expressed in the pharyngeal intestinal junction cell.

It is found in the apical cell membrane. Its function is as follows. Putative acyltransferase. Plays a role in the morphogenesis of a vulval toroid cell, vulF, which is located where the vulva and the uterus connect. Not required for specifying vulval cell fate. This Caenorhabditis elegans protein is Egg-laying defective protein 26.